The chain runs to 187 residues: Elongation factor P (187 aa).

It belongs to the elongation factor P family.

The protein resides in the cytoplasm. It participates in protein biosynthesis; polypeptide chain elongation. Its function is as follows. Involved in peptide bond synthesis. Stimulates efficient translation and peptide-bond synthesis on native or reconstituted 70S ribosomes in vitro. Probably functions indirectly by altering the affinity of the ribosome for aminoacyl-tRNA, thus increasing their reactivity as acceptors for peptidyl transferase. The polypeptide is Elongation factor P (Jannaschia sp. (strain CCS1)).